The following is a 343-amino-acid chain: General transcription and DNA repair factor IIH subunit TFB6 (343 aa).

Tyr69 carries the post-translational modification Phosphotyrosine. Phosphothreonine occurs at positions 71 and 84. Phosphoserine is present on residues Ser104, Ser105, Ser108, and Ser342.

As to quaternary structure, component of the general transcription factor TFIIH, composed of a 7-subunit TFIIH core complex composed of XPB/SSL2, XPD/RAD3, SSL1, TFB1, TFB2, TFB4 and TFB5 which is active in NER; the 3-subunit CTD-kinase module TFIIK composed of CCL1, KIN28, and TFB3 which is active in transcription; as well as TFB6 that regulates SSL2 association with the complex. In terms of processing, phosphorylation leads the dissociation of from SSL2.

The protein resides in the cytoplasm. It localises to the nucleus. Its function is as follows. Component of the general transcription and DNA repair factor IIH (TFIIH) core complex, which is involved in general and transcription-coupled nucleotide excision repair (NER) of damaged DNA and, when complexed to TFIIK, in RNA transcription by RNA polymerase II. In NER, TFIIH acts by opening DNA around the lesion to allow the excision of the damaged oligonucleotide and its replacement by a new DNA fragment. In transcription, TFIIH has an essential role in transcription initiation. When the pre-initiation complex (PIC) has been established, TFIIH is required for promoter opening and promoter escape. Phosphorylation of the C-terminal tail (CTD) of the largest subunit of RNA polymerase II by the kinase module TFIIK controls the initiation of transcription. TFB6 facilitates dissociation of the SSL2 helicase from TFIIH after transcription initiation. The protein is General transcription and DNA repair factor IIH subunit TFB6 of Saccharomyces cerevisiae (strain ATCC 204508 / S288c) (Baker's yeast).